A 163-amino-acid chain; its full sequence is Secretory-abundant heat soluble protein 53582 (163 aa).

Positions 1-19 (MARLFVAVALFGVVAFAAA) are cleaved as a signal peptide. The SAHS-c1 stretch occupies residues 22–51 (EWTGKTWLGSWASTDRAENWEAFVDALGLP). The segment at 67 to 95 (YKQGDKYHHEVSIPSKNFKKAIEYTLGTE) is SAHS-c2. The SAHS-c3 stretch occupies residues 108–157 (KYTEDGEKLVADVQIPSKNKQIHDIYEVQGDTLTKTYKVGDVVAKRWFTR).

This sequence belongs to the Secretory-abundant heat soluble protein (SAHS) family.

Its subcellular location is the secreted. In terms of biological role, secreted heat soluble protein acting as a molecular shield in water-deficient condition. Tardigrade-specific intrinsically disordered proteins (TDPs) are essential for desiccation tolerance by forming non-crystalline amorphous solids upon desiccation, and this vitrified state mirrors their protective capabilities. This is Secretory-abundant heat soluble protein 53582 from Hypsibius exemplaris (Freshwater tardigrade).